The following is a 389-amino-acid chain: Probable serine/threonine-protein kinase PBL11 (389 aa).

G2 is lipidated: N-myristoyl glycine. C4 carries S-palmitoyl cysteine lipidation. Residues 68–353 enclose the Protein kinase domain; sequence FRPDSVVGEG…NEIVKTMEEL (286 aa). Residues 74-82 and K106 each bind ATP; that span reads VGEGGFGCV. Y151 bears the Phosphotyrosine mark. D203 acts as the Proton acceptor in catalysis. Phosphoserine is present on residues S207 and S237. Residues T238 and T243 each carry the phosphothreonine modification. Y251 is subject to Phosphotyrosine.

This sequence belongs to the protein kinase superfamily. Ser/Thr protein kinase family. Roots, leaves and stems.

The protein resides in the cell membrane. It carries out the reaction L-seryl-[protein] + ATP = O-phospho-L-seryl-[protein] + ADP + H(+). The enzyme catalyses L-threonyl-[protein] + ATP = O-phospho-L-threonyl-[protein] + ADP + H(+). In terms of biological role, may play a role in the regulation of plant growth and development. May be involved in plant defense signaling. The polypeptide is Probable serine/threonine-protein kinase PBL11 (Arabidopsis thaliana (Mouse-ear cress)).